The chain runs to 378 residues: tRNA N(3)-cytidine methyltransferase METTL2B (378 aa).

Alanine 2 carries the post-translational modification N-acetylalanine. Serine 4 is modified (phosphoserine). 2 residues coordinate S-adenosyl-L-methionine: tryptophan 78 and tyrosine 82. Position 154 is a phosphothreonine (threonine 154). 5 residues coordinate S-adenosyl-L-methionine: glycine 188, aspartate 213, aspartate 239, leucine 240, and isoleucine 260.

Belongs to the methyltransferase superfamily. METL family. Monomer. Interacts with DALRD3.

The protein localises to the cytoplasm. It carries out the reaction cytidine(32) in tRNA(Thr) + S-adenosyl-L-methionine = N(3)-methylcytidine(32) in tRNA(Thr) + S-adenosyl-L-homocysteine + H(+). It catalyses the reaction cytidine(32) in tRNA(Arg)(CCU) + S-adenosyl-L-methionine = N(3)-methylcytidine(32) in tRNA(Arg)(CCU) + S-adenosyl-L-homocysteine + H(+). Its function is as follows. S-adenosyl-L-methionine-dependent methyltransferase that mediates N(3)-methylcytidine modification of residue 32 of the tRNA anticodon loop of tRNA(Thr)(UGU) and tRNA(Arg)(CCU). This chain is tRNA N(3)-cytidine methyltransferase METTL2B, found in Homo sapiens (Human).